A 1006-amino-acid chain; its full sequence is Probable protein phosphatase DDB_G0279461 (1006 aa).

Positions 1–12 (MMVPSLSTSISS) are enriched in polar residues. 7 disordered regions span residues 1-119 (MMVP…NNKE), 146-188 (SHAS…RSNS), 214-269 (SSED…NGIR), 312-387 (DAES…PPNQ), 459-513 (NINN…NNIQ), 525-563 (DYNIQEGNDINNDNYEIRVSNNDDDNDSSNNNNNNNSKF), and 604-642 (GSIPTDEDQNNNNNKNKNTTTTTTTTNTTTTTTTTTSAS). Positions 59-69 (NEEEGTADNEL) are enriched in acidic residues. Positions 65-122 (ADNELESLMSLVNDNNNNNNNTSGIDDDNNNDIDDNNNNNNNNNNNNNNNNNNKEGLN) form a coiled coil. The span at 77-88 (NDNNNNNNNTSG) shows a compositional bias: low complexity. The span at 89 to 99 (IDDDNNNDIDD) shows a compositional bias: acidic residues. The segment covering 100–117 (NNNNNNNNNNNNNNNNNN) has biased composition (low complexity). Polar residues predominate over residues 146 to 158 (SHASVSNQSSNGS). Low complexity-rich tracts occupy residues 220 to 234 (SCHNSNNNNKNNKNN), 244 to 254 (NINNNNNNNCN), and 316 to 387 (NYNN…PPNQ). Residues 450-516 (KIDNLNKNIN…NNNNNIQDIQ (67 aa)) adopt a coiled-coil conformation. Polar residues predominate over residues 466–481 (TDSQQPLPSIDVNFSH). The segment covering 482–511 (NNNNNNNDNDNNNNNNNNNNNNNNNNNNNN) has biased composition (low complexity). Polar residues predominate over residues 525–538 (DYNIQEGNDINNDN). Composition is skewed to low complexity over residues 552–561 (SSNNNNNNNS) and 613–639 (NNNNNKNKNTTTTTTTTNTTTTTTTTT). A PPM-type phosphatase domain is found at 744–1005 (DINKRGLKRA…DNISIIVVTL (262 aa)). Residues aspartate 784, glycine 785, aspartate 956, and aspartate 996 each coordinate Mn(2+).

This sequence in the C-terminal section; belongs to the PP2C family. Mg(2+) serves as cofactor. The cofactor is Mn(2+).

It catalyses the reaction O-phospho-L-seryl-[protein] + H2O = L-seryl-[protein] + phosphate. The enzyme catalyses O-phospho-L-threonyl-[protein] + H2O = L-threonyl-[protein] + phosphate. The chain is Probable protein phosphatase DDB_G0279461 from Dictyostelium discoideum (Social amoeba).